Consider the following 156-residue polypeptide: Small ribosomal subunit protein uS7 (156 aa).

It belongs to the universal ribosomal protein uS7 family. Part of the 30S ribosomal subunit. Contacts proteins S9 and S11.

In terms of biological role, one of the primary rRNA binding proteins, it binds directly to 16S rRNA where it nucleates assembly of the head domain of the 30S subunit. Is located at the subunit interface close to the decoding center, probably blocks exit of the E-site tRNA. The polypeptide is Small ribosomal subunit protein uS7 (Prochlorococcus marinus (strain NATL2A)).